The primary structure comprises 275 residues: Chlorophyll a-b binding protein 3, chloroplastic (275 aa).

Chlorophyll b is bound at residue Trp58. 3 residues coordinate chlorophyll a: Phe78, Ser84, and Glu102. Chlorophyll b is bound by residues Arg107, Ile142, Glu169, and Arg172. Residues Lys226, Glu227, Asn230, Arg232, Gln244, and His259 each contribute to the chlorophyll a site. The chain crosses the membrane as a helical span at residues 233–253 (LAMLAILGYFIQGLVTGVGPY).

This sequence belongs to the light-harvesting chlorophyll a/b-binding (LHC) protein family. The LHC complex consists of chlorophyll a-b binding proteins. Binds at least 14 chlorophylls (8 Chl-a and 6 Chl-b) and carotenoids such as lutein and neoxanthin. is required as a cofactor. Post-translationally, photoregulated by reversible phosphorylation of its threonine residues.

Its subcellular location is the plastid. The protein localises to the chloroplast thylakoid membrane. The light-harvesting complex (LHC) functions as a light receptor, it captures and delivers excitation energy to photosystems with which it is closely associated. In terms of biological role, may channel protons produced in the catalytic Mn center of water oxidation into the thylakoid lumen. This chain is Chlorophyll a-b binding protein 3, chloroplastic, found in Pisum sativum (Garden pea).